Consider the following 1004-residue polypeptide: Copper-transporting ATPase (1004 aa).

Over 1-262 (MREVILAVHG…FWKKNSIKST (262 aa)) the chain is Cytoplasmic. HMA domains follow at residues 2 to 67 (REVI…FDCE) and 80 to 146 (KEGL…FDSN). Positions 13, 16, 91, and 94 each coordinate Cu(+). A helical membrane pass occupies residues 263–283 (LLAIICMLLYMIVPMMWPTIV). Residues 284–303 (QDRIFPYKETSFVRGLFYRD) are Lumenal, vesicle-facing. Residues 304-324 (ILGVILASYIQFSVGFYFYKA) traverse the membrane as a helical segment. Over 325–335 (AWASLKHGSGT) the chain is Cytoplasmic. A helical membrane pass occupies residues 336–356 (MDTLVCVSTTCAYTFSVFSLV). Topologically, residues 357–370 (HNMFHPSSTGKLPR) are lumenal, vesicle. A helical membrane pass occupies residues 371 to 391 (IVFDTSIMIISYISIGKYLET). The Cytoplasmic segment spans residues 392-528 (LAKSQTSTAL…IQGYADYLAS (137 aa)). Residues 529–549 (IFVPGILILAVLTFFIWCFIL) traverse the membrane as a helical segment. At 550-577 (NISANPPVAFTANTKADNFFICLQTATS) the chain is on the lumenal, vesicle side. A helical membrane pass occupies residues 578–598 (VVIVACPCALGLATPTAIMVG). The Cytoplasmic portion of the chain corresponds to 599 to 901 (TGVGAQNGVL…LKTFKRIKLN (303 aa)). The 4-aspartylphosphate intermediate role is filled by aspartate 627. Mg(2+) contacts are provided by aspartate 838 and aspartate 842. The chain crosses the membrane as a helical span at residues 902 to 924 (LFWALCYNIFMIPIAMGVLIPWG). Over 925-927 (ITL) the chain is Lumenal, vesicle. Residues 928–950 (PPMLAGLAMAFSSVSVVLSSLML) form a helical membrane-spanning segment. Over 951–1004 (KKWTPPDIESHGISDFKSKFSIGNFWSRLFSTRAIAGEQDIESQAGLMSNEEVL) the chain is Cytoplasmic.

The protein belongs to the cation transport ATPase (P-type) (TC 3.A.3) family. Type IB subfamily. In terms of assembly, interacts with the copper chaperone ATX1 via the copper anion.

It localises to the golgi apparatus. The protein resides in the trans-Golgi network membrane. The catalysed reaction is Cu(+)(in) + ATP + H2O = Cu(+)(out) + ADP + phosphate + H(+). In terms of biological role, copper-transporting P-type ATPase necessary for the proper uptake of iron. Required for export of copper from cytosol into extracytosolic compartment. Retrieves copper from the metallochaperone ATX1 and incorporates it into trans-Golgi vesicles where they are acquired by the cell-surface iron transporter FET3. Required the production of inositolphosphorylceramide D, probably by delivering copper to a yet to be identified enzyme. The polypeptide is Copper-transporting ATPase (Saccharomyces cerevisiae (strain ATCC 204508 / S288c) (Baker's yeast)).